Reading from the N-terminus, the 467-residue chain is 6-phosphogluconate dehydrogenase, decarboxylating (467 aa).

Residues 9-14 (GLGVMG), 32-34 (NYT), 73-75 (VTA), and Asn-101 contribute to the NADP(+) site. Residues Asn-101 and 127–129 (SGG) each bind substrate. The active-site Proton acceptor is Lys-181. Residue 184-185 (HN) coordinates substrate. Catalysis depends on Glu-188, which acts as the Proton donor. Residues Tyr-189, Lys-259, Arg-286, and His-451 each coordinate substrate.

The protein belongs to the 6-phosphogluconate dehydrogenase family. Homodimer.

It carries out the reaction 6-phospho-D-gluconate + NADP(+) = D-ribulose 5-phosphate + CO2 + NADPH. The protein operates within carbohydrate degradation; pentose phosphate pathway; D-ribulose 5-phosphate from D-glucose 6-phosphate (oxidative stage): step 3/3. In terms of biological role, catalyzes the oxidative decarboxylation of 6-phosphogluconate to ribulose 5-phosphate and CO(2), with concomitant reduction of NADP to NADPH. The sequence is that of 6-phosphogluconate dehydrogenase, decarboxylating (gntZ) from Bacillus licheniformis.